Reading from the N-terminus, the 239-residue chain is Ribonuclease 3 (239 aa).

An RNase III domain is found at 12 to 137 (RAKLEGLIGH…LIAAIYLDGG (126 aa)). Glutamate 50 serves as a coordination point for Mg(2+). Aspartate 54 is an active-site residue. Aspartate 123 and glutamate 126 together coordinate Mg(2+). Glutamate 126 is an active-site residue. The DRBM domain maps to 162–231 (DAKTELQEWS…ATKMLEREGI (70 aa)).

The protein belongs to the ribonuclease III family. Homodimer. Mg(2+) is required as a cofactor.

The protein resides in the cytoplasm. It catalyses the reaction Endonucleolytic cleavage to 5'-phosphomonoester.. Digests double-stranded RNA. Involved in the processing of primary rRNA transcript to yield the immediate precursors to the large and small rRNAs (23S and 16S). Processes some mRNAs, and tRNAs when they are encoded in the rRNA operon. Processes pre-crRNA and tracrRNA of type II CRISPR loci if present in the organism. The protein is Ribonuclease 3 of Rhizobium johnstonii (strain DSM 114642 / LMG 32736 / 3841) (Rhizobium leguminosarum bv. viciae).